We begin with the raw amino-acid sequence, 178 residues long: Photosystem I assembly protein Ycf4 (178 aa).

2 consecutive transmembrane segments (helical) span residues 19-39 and 61-81; these read ILVALMVTIGGIGFLFASLSS and LIMGLYSLAAALLASYLWAVI.

The protein belongs to the Ycf4 family.

Its subcellular location is the cellular thylakoid membrane. Seems to be required for the assembly of the photosystem I complex. The sequence is that of Photosystem I assembly protein Ycf4 from Synechococcus sp. (strain CC9311).